A 185-amino-acid chain; its full sequence is Endoribonuclease YbeY (185 aa).

Residues H135, H139, and H145 each contribute to the Zn(2+) site.

The protein belongs to the endoribonuclease YbeY family. The cofactor is Zn(2+).

It localises to the cytoplasm. Functionally, single strand-specific metallo-endoribonuclease involved in late-stage 70S ribosome quality control and in maturation of the 3' terminus of the 16S rRNA. This is Endoribonuclease YbeY from Parasynechococcus marenigrum (strain WH8102).